Reading from the N-terminus, the 136-residue chain is Histone H3.2 (136 aa).

The segment at 1 to 20 (MARTKQTARKSTGGKAPRKQ) is disordered. At Lys-5 the chain carries N6-methylated lysine. Lys-10 is modified (N6-acetyllysine; alternate). Lys-10 is subject to N6-methylated lysine; alternate. The residue at position 11 (Ser-11) is a Phosphoserine. A Phosphothreonine modification is found at Thr-12. At Lys-15 the chain carries N6-acetyllysine. Lys-19 and Lys-24 each carry N6-acetyllysine; alternate. 2 positions are modified to N6-methylated lysine; alternate: Lys-19 and Lys-24. An N6-methylated lysine modification is found at Lys-37.

Belongs to the histone H3 family. The nucleosome is a histone octamer containing two molecules each of H2A, H2B, H3 and H4 assembled in one H3-H4 heterotetramer and two H2A-H2B heterodimers. The octamer wraps approximately 147 bp of DNA. Acetylation is generally linked to gene activation. Can be acetylated to form H3K9ac, H3K14ac, H3K18ac and H3K23ac. H3K9ac could compete with H3K9me and prevent gene silencing. H3K9ac is restricted to euchromatin. Post-translationally, methylated to form mainly H3K4me, H3K9me, H3K18me, H3K23me and H3K36me. H3K4me1/2/3, H3K9me3 and H3K36me1/2/3 are typical marks for euchromatin, whereas heterochromatic chromocenters are enriched in H3K9me1/2. H2BK143ub1 is probably prerequisite for H3K4me. In terms of processing, can be phosphorylated to form H3S10ph and H3T11ph.

The protein localises to the nucleus. It is found in the chromosome. Its function is as follows. Core component of nucleosome. Nucleosomes wrap and compact DNA into chromatin, limiting DNA accessibility to the cellular machineries which require DNA as a template. Histones thereby play a central role in transcription regulation, DNA repair, DNA replication and chromosomal stability. DNA accessibility is regulated via a complex set of post-translational modifications of histones, also called histone code, and nucleosome remodeling. This Cichorium intybus (Chicory) protein is Histone H3.2.